The sequence spans 100 residues: NADH-quinone oxidoreductase subunit K (100 aa).

The next 3 membrane-spanning stretches (helical) occupy residues 4–24 (LSYSLSLAAILFMLGLTGIMI), 29–49 (LFLLLGLEIMINAAALAFVIV), and 60–80 (VMYILTVTIAATEASIGLALL).

This sequence belongs to the complex I subunit 4L family. As to quaternary structure, NDH-1 is composed of 14 different subunits. Subunits NuoA, H, J, K, L, M, N constitute the membrane sector of the complex.

Its subcellular location is the cell membrane. It catalyses the reaction a quinone + NADH + 5 H(+)(in) = a quinol + NAD(+) + 4 H(+)(out). NDH-1 shuttles electrons from NADH, via FMN and iron-sulfur (Fe-S) centers, to quinones in the respiratory chain. The immediate electron acceptor for the enzyme in this species is believed to be ubiquinone. Couples the redox reaction to proton translocation (for every two electrons transferred, four hydrogen ions are translocated across the cytoplasmic membrane), and thus conserves the redox energy in a proton gradient. This is NADH-quinone oxidoreductase subunit K from Baumannia cicadellinicola subsp. Homalodisca coagulata.